Here is a 202-residue protein sequence, read N- to C-terminus: Small ribosomal subunit protein bS20c (202 aa).

A chloroplast-targeting transit peptide spans 1-79; that stretch reads MATIVQCLSS…KPMRQLIVCE (79 aa). The segment at 89 to 110 is disordered; that stretch reads SAAKRARQAEKRRVYNKSKKSE.

This sequence belongs to the bacterial ribosomal protein bS20 family. In terms of assembly, part of the 30S ribosomal subunit.

It localises to the plastid. Its subcellular location is the chloroplast. Functionally, binds directly to 16S ribosomal RNA. This is Small ribosomal subunit protein bS20c (RPS20) from Arabidopsis thaliana (Mouse-ear cress).